The primary structure comprises 213 residues: Large ribosomal subunit protein uL3 (213 aa).

At Gln151 the chain carries N5-methylglutamine.

The protein belongs to the universal ribosomal protein uL3 family. In terms of assembly, part of the 50S ribosomal subunit. Forms a cluster with proteins L14 and L19. Methylated by PrmB.

In terms of biological role, one of the primary rRNA binding proteins, it binds directly near the 3'-end of the 23S rRNA, where it nucleates assembly of the 50S subunit. This Allorhizobium ampelinum (strain ATCC BAA-846 / DSM 112012 / S4) (Agrobacterium vitis (strain S4)) protein is Large ribosomal subunit protein uL3.